The sequence spans 212 residues: Ribosomal RNA small subunit methyltransferase G (212 aa).

Residues glycine 80, leucine 85, 131 to 132 (AE), and arginine 146 contribute to the S-adenosyl-L-methionine site.

This sequence belongs to the methyltransferase superfamily. RNA methyltransferase RsmG family.

Its subcellular location is the cytoplasm. The catalysed reaction is guanosine(527) in 16S rRNA + S-adenosyl-L-methionine = N(7)-methylguanosine(527) in 16S rRNA + S-adenosyl-L-homocysteine. In terms of biological role, specifically methylates the N7 position of guanine in position 527 of 16S rRNA. The protein is Ribosomal RNA small subunit methyltransferase G of Xylella fastidiosa (strain M23).